The chain runs to 238 residues: Nuclear transcription factor Y subunit B-9 (238 aa).

A DNA-binding region spans residues 64-70; that stretch reads MPIANVI. Positions 91-102 are subunit association domain (SAD); sequence IQECVSEYISFV. Residues 203 to 238 are disordered; the sequence is RYYQNGSSGQDESSVGGGSSSSINGMPAFDHYGQYK. Over residues 208–227 the composition is skewed to low complexity; the sequence is GSSGQDESSVGGGSSSSING.

It belongs to the NFYB/HAP3 subunit family. Heterotrimeric transcription factor composed of three components, NF-YA, NF-YB and NF-YC. NF-YB and NF-YC must interact and dimerize for NF-YA association and DNA binding. Interacts with PRN1. In terms of tissue distribution, expressed in green siliques. Present in etiolated seedlings.

The protein resides in the nucleus. In terms of biological role, component of the NF-Y/HAP transcription factor complex. The NF-Y complex stimulates the transcription of various genes by recognizing and binding to a CCAAT motif in promoters. Acts as a central regulator of the embryogenesis. Required for the speciation of cotyledon identity and the completion of embryo maturation. Controls seed storage protein genes through the regulation of FUS3 and ABI3. Involved in the blue light (BL) and abscisic acid (ABA) signaling pathways. In Arabidopsis thaliana (Mouse-ear cress), this protein is Nuclear transcription factor Y subunit B-9 (NFYB9).